Here is a 145-residue protein sequence, read N- to C-terminus: Small ribosomal subunit protein uS19 (145 aa).

The residue at position 2 (A2) is an N-acetylalanine. K108 is covalently cross-linked (Glycyl lysine isopeptide (Lys-Gly) (interchain with G-Cter in SUMO2)).

The protein belongs to the universal ribosomal protein uS19 family. As to quaternary structure, component of the small ribosomal subunit.

Its subcellular location is the cytoplasm. Functionally, component of the small ribosomal subunit. The ribosome is a large ribonucleoprotein complex responsible for the synthesis of proteins in the cell. In Oryctolagus cuniculus (Rabbit), this protein is Small ribosomal subunit protein uS19 (RPS15).